Consider the following 602-residue polypeptide: Bifunctional lycopene cyclase/phytoene synthase (602 aa).

A lycopene beta-cyclase region spans residues 1–241 (MYDYAFVHLK…IVGGMAAFDQ (241 aa)). Transmembrane regions (helical) follow at residues 6-26 (FVHL…AYPI), 30-50 (IHLI…LPWD), 76-96 (FEEL…YILF), 118-138 (VVKV…WNAA), 146-166 (YLGL…TLAG), 168-188 (FILS…TFYL), and 230-250 (MLIV…YAFP). Positions 248–602 (AFPTLFPKVN…STLLRALYEQ (355 aa)) are phytoene synthase.

The protein in the N-terminal section; belongs to the lycopene beta-cyclase family. This sequence in the C-terminal section; belongs to the phytoene/squalene synthase family.

The protein localises to the membrane. It carries out the reaction all-trans-lycopene = gamma-carotene. The enzyme catalyses gamma-carotene = all-trans-beta-carotene. It catalyses the reaction 2 (2E,6E,10E)-geranylgeranyl diphosphate = 15-cis-phytoene + 2 diphosphate. The protein operates within carotenoid biosynthesis; beta-carotene biosynthesis. It functions in the pathway carotenoid biosynthesis; phytoene biosynthesis; all-trans-phytoene from geranylgeranyl diphosphate: step 1/1. Its function is as follows. Bifunctional enzyme that catalyzes the reactions from geranylgeranyl diphosphate to phytoene (phytoene synthase) and from lycopene to beta-carotene via the intermediate gamma-carotene and from 3,4-didehydrolycopene to torulene (lycopene cyclase). Torulene is further processed to the acidic carotenoid neurosporaxanthin. The cyclase preferentially catalyzes single cyclizations at only one end of the substrate to produce monocyclic carotenoids. Neurosporaxanthin is synthesized from geranyl-geranyl pyrophosphate (GGPP) through several enzymatic activities. Phytoene synthase activity performed by the bifunctional enzyme al-2 first produces phytoene from geranyl-geranyl pyrophosphate (GGPP). The phytoene dehydrogenase al-1 then introduces 5 desaturations to lead to 3,4-didehydrolycopene via the intermediates phytofluene, zeta-carotene, neurosporene and lycopene. Al-2 cyclase activity then converts 3,4-didehydrolycopene into torulene. Al-2 can also convet lycopene into gamma-carotene which in turn is converted to beta-carotene by an additional al-2 cyclization reaction. Torulene is the substrate of the dioxidase cao-2 that breaks the molecule, removing five carbon atoms to yield beta-apo-4'-carotenal, whereas the aldehyde dehydrogenase ylo-1 mediates the last step by converting beta-apo-4'-carotenal into neurosporaxanthin. In Neurospora crassa (strain ATCC 24698 / 74-OR23-1A / CBS 708.71 / DSM 1257 / FGSC 987), this protein is Bifunctional lycopene cyclase/phytoene synthase.